A 327-amino-acid chain; its full sequence is Eukaryotic translation initiation factor 3 subunit I (327 aa).

WD repeat units follow at residues 8-49, 51-89, 188-227, 229-268, and 285-324; these read GHER…GSYD, HNGAVWDIDVSWDTTKCVTASGDLTVKIWDAELGNCLYT, VHRYSVQDLQLSPRGDFLISASRDKTAALLDVNDLKKLKQ, KSERPVNSACISPNRDHICLGGGEDAMQVTQTSVSAGHFE, and GHFGPINTMAWHPSGTIIATGGEDGYIRIQEFDEDYLGFT.

Belongs to the eIF-3 subunit I family. In terms of assembly, component of the eukaryotic translation initiation factor 3 (eIF-3) complex.

It localises to the cytoplasm. Its function is as follows. Component of the eukaryotic translation initiation factor 3 (eIF-3) complex, which is involved in protein synthesis of a specialized repertoire of mRNAs and, together with other initiation factors, stimulates binding of mRNA and methionyl-tRNAi to the 40S ribosome. The eIF-3 complex specifically targets and initiates translation of a subset of mRNAs involved in cell proliferation. The polypeptide is Eukaryotic translation initiation factor 3 subunit I (Caenorhabditis elegans).